Consider the following 912-residue polypeptide: E3 ubiquitin-protein ligase HACE1 (912 aa).

ANK repeat units follow at residues 23-55 (LPED…NSKF), 64-93 (VKRS…DPNY), 97-126 (SGCT…DVNI), 130-159 (EGLT…NVDV), 163-192 (MGQT…DINR), 196-226 (SGAT…YLPD), and 228-253 (NGVT…QHHP). Residues 577–912 (NCEKLKQGIA…HCGSYGYTMA (336 aa)) form the HECT domain. Cys-879 functions as the Glycyl thioester intermediate in the catalytic mechanism.

It localises to the golgi apparatus. The protein resides in the golgi stack membrane. It is found in the cytoplasm. Its subcellular location is the endoplasmic reticulum. The catalysed reaction is S-ubiquitinyl-[E2 ubiquitin-conjugating enzyme]-L-cysteine + [acceptor protein]-L-lysine = [E2 ubiquitin-conjugating enzyme]-L-cysteine + N(6)-ubiquitinyl-[acceptor protein]-L-lysine.. It functions in the pathway protein modification; protein ubiquitination. In terms of biological role, E3 ubiquitin-protein ligase involved in Golgi membrane fusion and regulation of small GTPases. Acts as a regulator of Golgi membrane dynamics during the cell cycle: recruited to Golgi membrane by Rab proteins and regulates postmitotic Golgi membrane fusion. Acts by mediating ubiquitination during mitotic Golgi disassembly, ubiquitination serving as a signal for Golgi reassembly later, after cell division. The protein is E3 ubiquitin-protein ligase HACE1 (hace1) of Xenopus tropicalis (Western clawed frog).